Here is a 277-residue protein sequence, read N- to C-terminus: Co-chaperone protein DjlA (277 aa).

Residues 1 to 6 lie on the Periplasmic side of the membrane; that stretch reads MRYWGK. A helical transmembrane segment spans residues 7-31; it reads LLGLVLGVMYAPGVVGALLGLLVGH. Residues 32-277 are Cytoplasmic-facing; the sequence is MVDRALGAKR…DLIKREKGFK (246 aa). A J domain is found at 211 to 277; the sequence is DACKVLGVNS…DLIKREKGFK (67 aa).

Homodimer.

The protein resides in the cell inner membrane. Regulatory DnaK co-chaperone. Direct interaction between DnaK and DjlA is needed for the induction of the wcaABCDE operon, involved in the synthesis of a colanic acid polysaccharide capsule, possibly through activation of the RcsB/RcsC phosphotransfer signaling pathway. The colanic acid capsule may help the bacterium survive conditions outside the host. The chain is Co-chaperone protein DjlA from Yersinia pestis.